A 353-amino-acid chain; its full sequence is Photosystem II protein D1 (353 aa).

At threonine 2 the chain carries N-acetylthreonine. Position 2 is a phosphothreonine (threonine 2). 3 consecutive transmembrane segments (helical) span residues 29-46 (YIGW…TATS), 118-133 (HFFL…EWEL), and 142-156 (WIAV…AATA). Histidine 118 contributes to the chlorophyll a binding site. A pheophytin a-binding site is contributed by tyrosine 126. The [CaMn4O5] cluster site is built by aspartate 170 and glutamate 189. A helical transmembrane segment spans residues 197–218 (FHMLGVAGVFGGSLFSAMHGSL). Histidine 198 provides a ligand contact to chlorophyll a. Residues histidine 215 and 264–265 (SF) each bind a quinone. Position 215 (histidine 215) interacts with Fe cation. Histidine 272 contacts Fe cation. Residues 274-288 (FLAAWPVVGIWFTAL) form a helical membrane-spanning segment. [CaMn4O5] cluster contacts are provided by histidine 332, glutamate 333, aspartate 342, and alanine 344. Positions 345-353 (VVEAPAVNG) are excised as a propeptide.

This sequence belongs to the reaction center PufL/M/PsbA/D family. In terms of assembly, PSII is composed of 1 copy each of membrane proteins PsbA, PsbB, PsbC, PsbD, PsbE, PsbF, PsbH, PsbI, PsbJ, PsbK, PsbL, PsbM, PsbT, PsbX, PsbY, PsbZ, Psb30/Ycf12, at least 3 peripheral proteins of the oxygen-evolving complex and a large number of cofactors. It forms dimeric complexes. It depends on The D1/D2 heterodimer binds P680, chlorophylls that are the primary electron donor of PSII, and subsequent electron acceptors. It shares a non-heme iron and each subunit binds pheophytin, quinone, additional chlorophylls, carotenoids and lipids. D1 provides most of the ligands for the Mn4-Ca-O5 cluster of the oxygen-evolving complex (OEC). There is also a Cl(-1) ion associated with D1 and D2, which is required for oxygen evolution. The PSII complex binds additional chlorophylls, carotenoids and specific lipids. as a cofactor. Post-translationally, tyr-161 forms a radical intermediate that is referred to as redox-active TyrZ, YZ or Y-Z. C-terminally processed by CTPA; processing is essential to allow assembly of the oxygen-evolving complex and thus photosynthetic growth.

Its subcellular location is the plastid. The protein localises to the chloroplast thylakoid membrane. It catalyses the reaction 2 a plastoquinone + 4 hnu + 2 H2O = 2 a plastoquinol + O2. Photosystem II (PSII) is a light-driven water:plastoquinone oxidoreductase that uses light energy to abstract electrons from H(2)O, generating O(2) and a proton gradient subsequently used for ATP formation. It consists of a core antenna complex that captures photons, and an electron transfer chain that converts photonic excitation into a charge separation. The D1/D2 (PsbA/PsbD) reaction center heterodimer binds P680, the primary electron donor of PSII as well as several subsequent electron acceptors. The chain is Photosystem II protein D1 from Chlorella vulgaris (Green alga).